We begin with the raw amino-acid sequence, 532 residues long: Carboxypeptidase Y (532 aa).

Residues 1–20 form the signal peptide; the sequence is MKAFTSLLCGLGLSTTLAKA. Residues 21–111 constitute a propeptide, mediates translocation across the endoplasmic reticulum, renders the enzyme inactive during transit, and targets the molecule to the vacuole; that stretch reads ISLQRPLGLD…AIENYQLRVN (91 aa). The short motif at 24–27 is the Vacuolar targeting signal element; sequence QRPL. 2 N-linked (GlcNAc...) (high mannose) asparagine glycosylation sites follow: asparagine 124 and asparagine 198. 5 cysteine pairs are disulfide-bonded: cysteine 167/cysteine 409, cysteine 304/cysteine 318, cysteine 328/cysteine 351, cysteine 335/cysteine 344, and cysteine 373/cysteine 379. Residue serine 257 is part of the active site. N-linked (GlcNAc...) (high mannose) asparagine glycosylation is present at asparagine 279. Aspartate 449 is an active-site residue. Cysteine 452 is a substrate binding site. N-linked (GlcNAc...) (high mannose) asparagine glycosylation occurs at asparagine 479. Histidine 508 is an active-site residue. Residue methionine 509 participates in substrate binding.

The protein belongs to the peptidase S10 family. Post-translationally, enters the endoplasmic reticulum as an inactive zymogen and is modified by four N-linked core oligosaccharides, giving rise to a precursor known as P1 (67 kDa). As P1 transits through the Golgi, extension of its core oligosaccharides leads to the Golgi-modified P2 precursor (69 kDa). P2 is sorted away from secretory proteins at or beyond a late Golgi compartment and is subsequently delivered to the vacuole via a prevacuolar endosome-like compartment. Upon arrival in the vacuole, the N-terminal prosegment of P2 is cleaved by vacuolar proteases to yield the enzymatically active mature vacuolar form of CPY (61 kDa). The four high mannose core N-glycans found in mature CPY are Man(11-15)GlcNAc(2) at Asn-124, Man(8-12)GlcNAc(2) at Asn-198, Man(9-14)GlcNAc(2) at Asn-279 and phosphorylated Man(12-17)GlcNAc(2) as well as Man(11-16)GlcNAc(2) at Asn-479.

The protein localises to the vacuole lumen. It carries out the reaction Release of a C-terminal amino acid with broad specificity.. Its activity is regulated as follows. Inhibited by ZPCK. Vacuolar serine-type carboxypeptidase involved in degradation of small peptides. Digests preferentially peptides containing an aliphatic or hydrophobic residue in P1' position, as well as methionine, leucine or phenylalanine in P1 position of ester substrate. Also plays a role in breakdown of the autophagic body and the autophagosome-dependent protein synthesis. Plays a key role in phytochelatin (PC) synthesis from glutathione (GSH) by cleaving the Gly from GSH and form the PC-peptides of the structure (gamma-Glu-Cys)2-Gly. Also involved in resistance to xenobiotics via the degradation of glutathione-S-conjugates. The sequence is that of Carboxypeptidase Y from Saccharomyces cerevisiae (strain ATCC 204508 / S288c) (Baker's yeast).